The primary structure comprises 154 residues: MIIKNLQEFYPLLIPNAPLIAIDYGSKKLGIALSNQERNIAMPLNTIIEINKKIVITSLLSIIEKYKVCGVVIGLPIDMSGAVTEQTNIVMKFAEELAKSINLPIYLQDERLTTKAANNFLKSFGVKRKDRNNNDDAVAASMILETVLDSMKKL.

This sequence belongs to the YqgF nuclease family.

The protein resides in the cytoplasm. Functionally, could be a nuclease involved in processing of the 5'-end of pre-16S rRNA. The protein is Putative pre-16S rRNA nuclease of Rickettsia felis (strain ATCC VR-1525 / URRWXCal2) (Rickettsia azadi).